A 312-amino-acid chain; its full sequence is uncharacterized protein (312 aa).

It belongs to the mimivirus R69 family.

This is an uncharacterized protein from Acanthamoeba polyphaga mimivirus (APMV).